We begin with the raw amino-acid sequence, 354 residues long: Elongation factor Ts (354 aa).

Residues 81–84 form an involved in Mg(2+) ion dislocation from EF-Tu region; the sequence is TDFV.

This sequence belongs to the EF-Ts family.

Its subcellular location is the cytoplasm. Associates with the EF-Tu.GDP complex and induces the exchange of GDP to GTP. It remains bound to the aminoacyl-tRNA.EF-Tu.GTP complex up to the GTP hydrolysis stage on the ribosome. The sequence is that of Elongation factor Ts from Campylobacter fetus subsp. fetus (strain 82-40).